Consider the following 113-residue polypeptide: UPF0482 protein KPK_2871 (113 aa).

The signal sequence occupies residues 1–28 (MNMTLNKRWCLTAILALSAVVYTSSSFA). Positions 38-61 (GDSAQSRQQASMEKEQWNDTRSLR) are disordered. The span at 39-48 (DSAQSRQQAS) shows a compositional bias: polar residues. The segment covering 49 to 59 (MEKEQWNDTRS) has biased composition (basic and acidic residues).

It belongs to the UPF0482 family.

The sequence is that of UPF0482 protein KPK_2871 from Klebsiella pneumoniae (strain 342).